The primary structure comprises 151 residues: MGGKAKILLVNGPNLNLLGRREPGHYGHHTLDQIVKELQDESTSSGVVLEHIQSNAEHELIDAIHATEAEFIIINPAAFTHTSVALRDAILGVSIPFIEVHLSNVHAREPFRHHSYFSDKAVGVICGLGAQGYQFALQSAISRLKAKSAEH.

Residue Tyr26 is the Proton acceptor of the active site. Substrate is bound by residues Asn75, His81, and Asp88. The active-site Proton donor is the His101. Residues 102 to 103 and Arg112 each bind substrate; that span reads LS.

Belongs to the type-II 3-dehydroquinase family. As to quaternary structure, homododecamer.

It catalyses the reaction 3-dehydroquinate = 3-dehydroshikimate + H2O. Its pathway is metabolic intermediate biosynthesis; chorismate biosynthesis; chorismate from D-erythrose 4-phosphate and phosphoenolpyruvate: step 3/7. Its function is as follows. Catalyzes a trans-dehydration via an enolate intermediate. In Shewanella sediminis (strain HAW-EB3), this protein is 3-dehydroquinate dehydratase.